We begin with the raw amino-acid sequence, 407 residues long: Protein NIS1 (407 aa).

A compositionally biased stretch (low complexity) spans 41 to 61; it reads SNSNSNSNTNSNTNSNTNSNS. A disordered region spans residues 41–64; sequence SNSNSNSNTNSNTNSNTNSNSDTK. Phosphoserine is present on residues S260, S264, S300, and S302. Residues 277–302 show a composition bias toward polar residues; that stretch reads IKQNSTTPTTRSVYNKNVGRSNTSPS. The interval 277–315 is disordered; that stretch reads IKQNSTTPTTRSVYNKNVGRSNTSPSVLYHPKRRGKLNT. Over residues 306-315 the composition is skewed to basic residues; the sequence is HPKRRGKLNT. The SUMO-binding signature appears at 391–398; the sequence is IIIPDSQD.

In terms of assembly, interacts with CBF2, GIS1, NAP1, PRM8, REI1, SHS1 and SMT3.

Its subcellular location is the bud neck. It is found in the cytoplasm. The protein localises to the cell cortex. Functionally, may be involved in a mitotic signaling network. Binds sumoylated proteins and may stabilize SUMO chains. In Saccharomyces cerevisiae (strain ATCC 204508 / S288c) (Baker's yeast), this protein is Protein NIS1 (NIS1).